Consider the following 124-residue polypeptide: Small ribosomal subunit protein uS12 (124 aa).

The residue at position 89 (Asp-89) is a 3-methylthioaspartic acid. The disordered stretch occupies residues 105–124 (AGVKDRKKGRSKYGAKRPKA). Over residues 109–124 (DRKKGRSKYGAKRPKA) the composition is skewed to basic residues.

It belongs to the universal ribosomal protein uS12 family. As to quaternary structure, part of the 30S ribosomal subunit. Contacts proteins S8 and S17. May interact with IF1 in the 30S initiation complex.

In terms of biological role, with S4 and S5 plays an important role in translational accuracy. Its function is as follows. Interacts with and stabilizes bases of the 16S rRNA that are involved in tRNA selection in the A site and with the mRNA backbone. Located at the interface of the 30S and 50S subunits, it traverses the body of the 30S subunit contacting proteins on the other side and probably holding the rRNA structure together. The combined cluster of proteins S8, S12 and S17 appears to hold together the shoulder and platform of the 30S subunit. The polypeptide is Small ribosomal subunit protein uS12 (Dichelobacter nodosus (strain VCS1703A)).